Here is a 188-residue protein sequence, read N- to C-terminus: Actin-related protein 2/3 complex subunit 3 (188 aa).

The protein belongs to the ARPC3 family. Component of the Arp2/3 complex.

The protein resides in the cytoplasm. It is found in the cytoskeleton. In terms of biological role, functions as a component of the Arp2/3 complex which is involved in regulation of actin polymerization and together with an activating nucleation-promoting factor (NPF) mediates the formation of branched actin networks. The polypeptide is Actin-related protein 2/3 complex subunit 3 (Entamoeba histolytica (strain ATCC 30459 / HM-1:IMSS / ABRM)).